We begin with the raw amino-acid sequence, 243 residues long: Protein VERNALIZATION 1 (243 aa).

The MADS-box domain occupies 1–61 (MGRGKVQLKR…GKLYEFATDS (61 aa)). The region spanning 88 to 178 (QGNWCHEYRK…QKELVEKQKA (91 aa)) is the K-box domain. Residues 122–178 (LKELQQLEQQLESSLKHIRSRKNQLMHESISELQRKERSLQEENKALQKELVEKQKA) are a coiled coil. Positions 173-243 (VEKQKAHTQQ…PPWMVSHISG (71 aa)) are disordered. Residues 179 to 192 (HTQQAQWEQTHPQT) show a composition bias toward polar residues.

It is found in the nucleus. Functionally, component of a grass-specific mechanism of vernalization, a process by which prolonged cold exposure provides competence to flower in daylengths longer than 12 hours. Involved in the exit of vernalization and confers flowering competency at the expense of freezing tolerance, probably by promoting the expression of VRN3; this process is essential in cv. Bd29-1 for flowering but seems do not occur in cv. Bd21. The protein is Protein VERNALIZATION 1 of Brachypodium distachyon (Purple false brome).